Here is a 560-residue protein sequence, read N- to C-terminus: Membrane protein insertase YidC (560 aa).

Helical transmembrane passes span 7-27, 334-354, 357-377, 431-451, 476-496, and 522-542; these read NLIA…YFVV, AIDF…MNFF, YVGN…LLMF, LPIL…YVTI, LFGF…WPIL, and FMPL…LIYW.

The protein belongs to the OXA1/ALB3/YidC family. Type 1 subfamily. Interacts with the Sec translocase complex via SecD. Specifically interacts with transmembrane segments of nascent integral membrane proteins during membrane integration.

It is found in the cell inner membrane. Its function is as follows. Required for the insertion and/or proper folding and/or complex formation of integral membrane proteins into the membrane. Involved in integration of membrane proteins that insert both dependently and independently of the Sec translocase complex, as well as at least some lipoproteins. Aids folding of multispanning membrane proteins. The chain is Membrane protein insertase YidC from Rickettsia canadensis (strain McKiel).